Reading from the N-terminus, the 109-residue chain is Large ribosomal subunit protein uL22 (109 aa).

This sequence belongs to the universal ribosomal protein uL22 family. Part of the 50S ribosomal subunit.

Functionally, this protein binds specifically to 23S rRNA; its binding is stimulated by other ribosomal proteins, e.g. L4, L17, and L20. It is important during the early stages of 50S assembly. It makes multiple contacts with different domains of the 23S rRNA in the assembled 50S subunit and ribosome. The globular domain of the protein is located near the polypeptide exit tunnel on the outside of the subunit, while an extended beta-hairpin is found that lines the wall of the exit tunnel in the center of the 70S ribosome. The polypeptide is Large ribosomal subunit protein uL22 (Dehalococcoides mccartyi (strain ATCC BAA-2266 / KCTC 15142 / 195) (Dehalococcoides ethenogenes (strain 195))).